A 292-amino-acid chain; its full sequence is Mycothiol acetyltransferase (292 aa).

N-acetyltransferase domains are found at residues 2 to 138 (AEVV…PSAP) and 141 to 292 (VTVR…YAHS). Glutamate 33 provides a ligand contact to 1D-myo-inositol 2-(L-cysteinylamino)-2-deoxy-alpha-D-glucopyranoside. 68 to 70 (AVV) contacts acetyl-CoA. Residues glutamate 168, lysine 215, and glutamate 225 each contribute to the 1D-myo-inositol 2-(L-cysteinylamino)-2-deoxy-alpha-D-glucopyranoside site. Acetyl-CoA is bound by residues 229-231 (VAV) and 236-242 (QGRGLGR). Tyrosine 263 contacts 1D-myo-inositol 2-(L-cysteinylamino)-2-deoxy-alpha-D-glucopyranoside. 268 to 273 (NAAALH) is an acetyl-CoA binding site.

The protein belongs to the acetyltransferase family. MshD subfamily. In terms of assembly, monomer.

It catalyses the reaction 1D-myo-inositol 2-(L-cysteinylamino)-2-deoxy-alpha-D-glucopyranoside + acetyl-CoA = mycothiol + CoA + H(+). Functionally, catalyzes the transfer of acetyl from acetyl-CoA to desacetylmycothiol (Cys-GlcN-Ins) to form mycothiol. This chain is Mycothiol acetyltransferase, found in Tsukamurella paurometabola (strain ATCC 8368 / DSM 20162 / CCUG 35730 / CIP 100753 / JCM 10117 / KCTC 9821 / NBRC 16120 / NCIMB 702349 / NCTC 13040) (Corynebacterium paurometabolum).